The primary structure comprises 363 residues: Probable tRNA pseudouridine synthase D (363 aa).

The Nucleophile role is filled by Asp82. The 213-residue stretch at 151 to 363 folds into the TRUD domain; it reads YLPAYIGYQR…IARTDPRLFT (213 aa).

Belongs to the pseudouridine synthase TruD family.

The enzyme catalyses uridine(13) in tRNA = pseudouridine(13) in tRNA. In terms of biological role, could be responsible for synthesis of pseudouridine from uracil-13 in transfer RNAs. The polypeptide is Probable tRNA pseudouridine synthase D (Sulfurisphaera tokodaii (strain DSM 16993 / JCM 10545 / NBRC 100140 / 7) (Sulfolobus tokodaii)).